The sequence spans 120 residues: Transcription elongation factor 1 homolog (120 aa).

Residues C25, C28, C49, and C52 each contribute to the Zn(2+) site. Positions 84-110 (EDDVVQEEEEEVEEEEEEEEEEDDEDD) are enriched in acidic residues. Residues 84–120 (EDDVVQEEEEEVEEEEEEEEEEDDEDDHVSVKRKYNF) are disordered.

It belongs to the ELOF1 family.

The protein resides in the nucleus. Functionally, transcription elongation factor implicated in the maintenance of proper chromatin structure in actively transcribed regions. This chain is Transcription elongation factor 1 homolog, found in Arabidopsis thaliana (Mouse-ear cress).